Here is an 844-residue protein sequence, read N- to C-terminus: Protein translocase subunit SecA (844 aa).

Residues glutamine 89, 107 to 111 (GEGKT), and aspartate 497 contribute to the ATP site. 4 residues coordinate Zn(2+): cysteine 829, cysteine 831, cysteine 840, and histidine 841.

This sequence belongs to the SecA family. Monomer and homodimer. Part of the essential Sec protein translocation apparatus which comprises SecA, SecYEG and auxiliary proteins SecDF. Other proteins may also be involved. The cofactor is Zn(2+).

Its subcellular location is the cell membrane. The protein resides in the cytoplasm. It carries out the reaction ATP + H2O + cellular proteinSide 1 = ADP + phosphate + cellular proteinSide 2.. Part of the Sec protein translocase complex. Interacts with the SecYEG preprotein conducting channel. Has a central role in coupling the hydrolysis of ATP to the transfer of proteins into and across the cell membrane, serving as an ATP-driven molecular motor driving the stepwise translocation of polypeptide chains across the membrane. The protein is Protein translocase subunit SecA of Streptococcus suis (strain 98HAH33).